A 347-amino-acid chain; its full sequence is Protein RecA (347 aa).

65–72 (GPESSGKT) is an ATP binding site.

The protein belongs to the RecA family.

It is found in the cytoplasm. Functionally, can catalyze the hydrolysis of ATP in the presence of single-stranded DNA, the ATP-dependent uptake of single-stranded DNA by duplex DNA, and the ATP-dependent hybridization of homologous single-stranded DNAs. It interacts with LexA causing its activation and leading to its autocatalytic cleavage. This chain is Protein RecA, found in Stutzerimonas stutzeri (Pseudomonas stutzeri).